A 92-amino-acid polypeptide reads, in one-letter code: Cell division protein FtsB (92 aa).

Topologically, residues 1–3 (MRL) are cytoplasmic. A helical membrane pass occupies residues 4–21 (LILILLSVLVLFQHDFWF). Topologically, residues 22 to 92 (GSNGFLDYRQ…VFYHIVKESK (71 aa)) are periplasmic. A coiled-coil region spans residues 28–63 (DYRQNAEKIKENQAENEKLSQRNQRINAEIQGLTKG).

Belongs to the FtsB family. As to quaternary structure, part of a complex composed of FtsB, FtsL and FtsQ.

It localises to the cell inner membrane. Essential cell division protein. May link together the upstream cell division proteins, which are predominantly cytoplasmic, with the downstream cell division proteins, which are predominantly periplasmic. The polypeptide is Cell division protein FtsB (Haemophilus influenzae (strain PittEE)).